Consider the following 202-residue polypeptide: LexA repressor (202 aa).

Positions 28 to 48 form a DNA-binding region, H-T-H motif; the sequence is RAEIAQELGFKSPNAAEEHLK. Catalysis depends on for autocatalytic cleavage activity residues serine 123 and lysine 160.

The protein belongs to the peptidase S24 family. As to quaternary structure, homodimer.

The enzyme catalyses Hydrolysis of Ala-|-Gly bond in repressor LexA.. In terms of biological role, represses a number of genes involved in the response to DNA damage (SOS response), including recA and lexA. In the presence of single-stranded DNA, RecA interacts with LexA causing an autocatalytic cleavage which disrupts the DNA-binding part of LexA, leading to derepression of the SOS regulon and eventually DNA repair. This is LexA repressor from Pseudomonas chlororaphis (Pseudomonas aureofaciens).